Reading from the N-terminus, the 285-residue chain is Bifunctional protein FolD (285 aa).

NADP(+) contacts are provided by residues 166–168 (GAS) and Ile-232.

The protein belongs to the tetrahydrofolate dehydrogenase/cyclohydrolase family. Homodimer.

It catalyses the reaction (6R)-5,10-methylene-5,6,7,8-tetrahydrofolate + NADP(+) = (6R)-5,10-methenyltetrahydrofolate + NADPH. It carries out the reaction (6R)-5,10-methenyltetrahydrofolate + H2O = (6R)-10-formyltetrahydrofolate + H(+). Its pathway is one-carbon metabolism; tetrahydrofolate interconversion. The NAD(+)-dependent dehydrogenase is activated by inorganic phosphate. In terms of biological role, catalyzes the oxidation of 5,10-methylenetetrahydrofolate to 5,10-methenyltetrahydrofolate and then the hydrolysis of 5,10-methenyltetrahydrofolate to 10-formyltetrahydrofolate. The polypeptide is Bifunctional protein FolD (Photobacterium phosphoreum).